A 379-amino-acid polypeptide reads, in one-letter code: Transaminase htyB (379 aa).

R92 is a pyridoxal 5'-phosphate binding site. Position 203 is an N6-(pyridoxal phosphate)lysine (K203). Residue E239 coordinates pyridoxal 5'-phosphate.

It belongs to the class-IV pyridoxal-phosphate-dependent aminotransferase family. It depends on pyridoxal 5'-phosphate as a cofactor.

Its pathway is antifungal biosynthesis. Transaminase; part of the gene cluster that mediates the de novo generation of L-homotyrosine from acetyl-CoA and 4-hydroxyphenyl-pyruvate. L-homotyrosine is a building block of echinocandin B, a fungal lipidated cyclic hexapeptide that acts as an antifungal agent. L-homotyrosine 4-hydroxyphenyl-pyruvate first undergoes an aldol-type condensation by htyA with the C-2 of acetyl-CoA followed by the release of CoA to form 2-(4-hydroxybenzyl)-malate. This is followed by isomerization of 2-(4-hydroxy-benzyl)-malate to 3-(4-hydroxybenzyl)-malate by htyD. Thereafter, 3-(4-hydroxybenzyl)-malate undergoes decarboxylation and oxidation to form 2-oxo-4-(4-hydroxybenzyl)butanoic acid, coupled to reduction of NAD(+) to NADH by htyC. The product then undergoes transamination catalyzed by htyB to form L-homotyrosine. This Aspergillus rugulosus (Emericella rugulosa) protein is Transaminase htyB.